Reading from the N-terminus, the 117-residue chain is Large ribosomal subunit protein bL19 (117 aa).

Belongs to the bacterial ribosomal protein bL19 family.

Functionally, this protein is located at the 30S-50S ribosomal subunit interface and may play a role in the structure and function of the aminoacyl-tRNA binding site. This is Large ribosomal subunit protein bL19 from Shewanella denitrificans (strain OS217 / ATCC BAA-1090 / DSM 15013).